The primary structure comprises 343 residues: Cysteine proteinase 1 (343 aa).

The signal sequence occupies residues 1–18 (MKVILLFVLAVFTVFVSS). Residues 19 to 117 (RGIPLEEQSQ…DYLDDEFINS (99 aa)) constitute a propeptide, activation peptide. Intrachain disulfides connect Cys139–Cys190, Cys173–Cys224, and Cys279–Cys332. The active site involves Cys142. Active-site residues include His286 and Asn311.

The protein belongs to the peptidase C1 family. Post-translationally, phosphoglycosylated, contains GlcNAc-alpha-1-P-Ser residues.

The protein resides in the lysosome. Its function is as follows. Cysteine proteinases 1 and 2 are believed to participate in the breakdown of protein during differentiation of Dictyostelium as a response to starvation. This chain is Cysteine proteinase 1 (cprA), found in Dictyostelium discoideum (Social amoeba).